The sequence spans 443 residues: Tol-Pal system protein TolB (443 aa).

The signal sequence occupies residues 1 to 24; that stretch reads MSFQIRVFTAILAVLSLFTAPVLA. Residues 424 to 443 form a disordered region; sequence LRPVRTPEGGSDPSWSPLQR.

Belongs to the TolB family. In terms of assembly, the Tol-Pal system is composed of five core proteins: the inner membrane proteins TolA, TolQ and TolR, the periplasmic protein TolB and the outer membrane protein Pal. They form a network linking the inner and outer membranes and the peptidoglycan layer.

The protein localises to the periplasm. Part of the Tol-Pal system, which plays a role in outer membrane invagination during cell division and is important for maintaining outer membrane integrity. The polypeptide is Tol-Pal system protein TolB (Roseobacter denitrificans (strain ATCC 33942 / OCh 114) (Erythrobacter sp. (strain OCh 114))).